A 197-amino-acid polypeptide reads, in one-letter code: Putative phosphopantothenoylcysteine decarboxylase (197 aa).

FMN contacts are provided by residues Phe-52 and 102–105; that span reads SANT. A substrate-binding site is contributed by Asn-139. Cys-174 acts as the Proton donor in catalysis.

This sequence belongs to the HFCD (homooligomeric flavin containing Cys decarboxylase) superfamily. As to quaternary structure, homotrimer. The cofactor is FMN.

It carries out the reaction N-[(R)-4-phosphopantothenoyl]-L-cysteine + H(+) = (R)-4'-phosphopantetheine + CO2. It functions in the pathway cofactor biosynthesis; coenzyme A biosynthesis; CoA from (R)-pantothenate: step 3/5. Functionally, necessary for the biosynthesis of coenzyme A. Catalyzes the decarboxylation of 4-phosphopantothenoylcysteine to form 4'-phosphopantotheine. This Dictyostelium discoideum (Social amoeba) protein is Putative phosphopantothenoylcysteine decarboxylase (ppcdc).